A 562-amino-acid polypeptide reads, in one-letter code: Dihydroxy-acid dehydratase (562 aa).

D80 is a Mg(2+) binding site. C121 contacts [2Fe-2S] cluster. Positions 122 and 123 each coordinate Mg(2+). The residue at position 123 (K123) is an N6-carboxylysine. C194 contributes to the [2Fe-2S] cluster binding site. E446 is a binding site for Mg(2+). The Proton acceptor role is filled by S472.

This sequence belongs to the IlvD/Edd family. As to quaternary structure, homodimer. [2Fe-2S] cluster serves as cofactor. The cofactor is Mg(2+).

The catalysed reaction is (2R)-2,3-dihydroxy-3-methylbutanoate = 3-methyl-2-oxobutanoate + H2O. The enzyme catalyses (2R,3R)-2,3-dihydroxy-3-methylpentanoate = (S)-3-methyl-2-oxopentanoate + H2O. The protein operates within amino-acid biosynthesis; L-isoleucine biosynthesis; L-isoleucine from 2-oxobutanoate: step 3/4. Its pathway is amino-acid biosynthesis; L-valine biosynthesis; L-valine from pyruvate: step 3/4. Its function is as follows. Functions in the biosynthesis of branched-chain amino acids. Catalyzes the dehydration of (2R,3R)-2,3-dihydroxy-3-methylpentanoate (2,3-dihydroxy-3-methylvalerate) into 2-oxo-3-methylpentanoate (2-oxo-3-methylvalerate) and of (2R)-2,3-dihydroxy-3-methylbutanoate (2,3-dihydroxyisovalerate) into 2-oxo-3-methylbutanoate (2-oxoisovalerate), the penultimate precursor to L-isoleucine and L-valine, respectively. In Staphylococcus aureus (strain Mu50 / ATCC 700699), this protein is Dihydroxy-acid dehydratase.